The primary structure comprises 201 residues: Putative 3-methyladenine DNA glycosylase (201 aa).

It belongs to the DNA glycosylase MPG family.

This Trichodesmium erythraeum (strain IMS101) protein is Putative 3-methyladenine DNA glycosylase.